Here is a 648-residue protein sequence, read N- to C-terminus: Forkhead box protein N1 (648 aa).

A disordered region spans residues 1–95; sequence MVSLLPPQSD…PGPGSFRLSP (95 aa). Polar residues predominate over residues 38–50; sequence APQNKHANFSCSS. Residues 54–67 show a composition bias toward pro residues; it reads DGPPERTPSLPPHS. The fork-head DNA-binding region spans 271–367; the sequence is KPIYSYSILI…EELQKWKRKD (97 aa). Disordered stretches follow at residues 392–432, 457–521, and 629–648; these read LGSP…APGP, HLSP…TLLP, and SAAA…LALA. The segment covering 398–412 has biased composition (pro residues); it reads GCPPPGLAGPGPIRP.

As to expression, bone marrow (at protein level). Expressed in thymus and skin.

It localises to the nucleus. Transcriptional regulator which regulates the development, differentiation, and function of thymic epithelial cells (TECs) both in the prenatal and postnatal thymus. Acts as a master regulator of the TECs lineage development and is required from the onset of differentiation in progenitor TECs in the developing fetus to the final differentiation steps through which TECs mature to acquire their full functionality. Regulates, either directly or indirectly the expression of a variety of genes that mediate diverse aspects of thymus development and function, including MHC Class II, DLL4, CCL25, CTSL, CD40 and PAX1. Regulates the differentiation of the immature TECs into functional cortical TECs (cTECs) and medullary TECs (mTECs). Essential for maintenance of mTECs population in the postnatal thymus. Involved in the morphogenesis and maintenance of the three-dimensional thymic microstructure which is necessary for a fully functional thymus. Plays an important role in the maintenance of hematopoiesis and particularly T lineage progenitors within the bone marrow niche with age. Essential for the vascularization of the thymus anlage. Promotes the terminal differentiation of epithelial cells in the epidermis and hair follicles, partly by negatively regulating the activity of protein kinase C. This chain is Forkhead box protein N1 (Foxn1), found in Mus musculus (Mouse).